The following is a 311-amino-acid chain: Putative prophage capsid protein YqbE (311 aa).

Belongs to the encapsulin family. Family 3 subfamily.

Its function is as follows. Possibly a prophage capsid protein. The protein is Putative prophage capsid protein YqbE (yqbE) of Bacillus subtilis (strain 168).